A 655-amino-acid polypeptide reads, in one-letter code: Cyclomaltodextrin glucanotransferase (655 aa).

An N-terminal signal peptide occupies residues methionine 1–alanine 30. The Ca(2+) site is built by aspartate 55, asparagine 60, asparagine 61, glycine 79, and aspartate 81. Tyrosine 123 to tryptophan 124 lines the substrate pocket. Position 164 (asparagine 164) interacts with Ca(2+). Residues histidine 165 and asparagine 217–asparagine 220 contribute to the substrate site. Residue aspartate 223 participates in Ca(2+) binding. Arginine 251 provides a ligand contact to substrate. Catalysis depends on aspartate 253, which acts as the Nucleophile. Lysine 256 to histidine 257 is a binding site for substrate. Histidine 257 is a binding site for Ca(2+). Catalysis depends on glutamate 287, which acts as the Proton donor. Residues histidine 362, aspartate 436, and arginine 440 each coordinate substrate. The region spanning alanine 554–phenylalanine 655 is the CBM20 domain. Residues threonine 630–phenylalanine 655 are disordered.

This sequence belongs to the glycosyl hydrolase 13 family. As to quaternary structure, monomer. The cofactor is Ca(2+).

It catalyses the reaction Cyclizes part of a (1-&gt;4)-alpha-D-glucan chain by formation of a (1-&gt;4)-alpha-D-glucosidic bond.. In Klebsiella oxytoca, this protein is Cyclomaltodextrin glucanotransferase (cgt).